We begin with the raw amino-acid sequence, 215 residues long: LexA repressor (215 aa).

A DNA-binding region (H-T-H motif) is located at residues 28–48; that stretch reads RAEIAAELGFSSPNAAEEHLR. Catalysis depends on for autocatalytic cleavage activity residues Ser-133 and Lys-170.

The protein belongs to the peptidase S24 family. Homodimer.

It carries out the reaction Hydrolysis of Ala-|-Gly bond in repressor LexA.. Its function is as follows. Represses a number of genes involved in the response to DNA damage (SOS response), including recA and lexA. In the presence of single-stranded DNA, RecA interacts with LexA causing an autocatalytic cleavage which disrupts the DNA-binding part of LexA, leading to derepression of the SOS regulon and eventually DNA repair. In Burkholderia vietnamiensis (strain G4 / LMG 22486) (Burkholderia cepacia (strain R1808)), this protein is LexA repressor.